The sequence spans 207 residues: Cytochrome c biogenesis ATP-binding export protein CcmA (207 aa).

In terms of domain architecture, ABC transporter spans 6–207 (LCAEGLECIR…RGDCRSLNLS (202 aa)). 38–45 (GANGAGKT) is an ATP binding site.

Belongs to the ABC transporter superfamily. CcmA exporter (TC 3.A.1.107) family. In terms of assembly, the complex is composed of two ATP-binding proteins (CcmA) and two transmembrane proteins (CcmB).

The protein resides in the cell inner membrane. The enzyme catalyses heme b(in) + ATP + H2O = heme b(out) + ADP + phosphate + H(+). Part of the ABC transporter complex CcmAB involved in the biogenesis of c-type cytochromes; once thought to export heme, this seems not to be the case, but its exact role is uncertain. Responsible for energy coupling to the transport system. The polypeptide is Cytochrome c biogenesis ATP-binding export protein CcmA (Methylococcus capsulatus (strain ATCC 33009 / NCIMB 11132 / Bath)).